Reading from the N-terminus, the 1307-residue chain is Histone-lysine N-methyltransferase SETDB1 (1307 aa).

Residues 30–65 (VEELGISMEELRQYIDEELEKMDCIQQRKKQLAELE) adopt a coiled-coil conformation. Phosphoserine occurs at positions 112 and 117. At Thr120 the chain carries Phosphothreonine. Residues 127–148 (DEDDDVLSIDSGDAGSRTPKDQ) are disordered. Lys182 is covalently cross-linked (Glycyl lysine isopeptide (Lys-Gly) (interchain with G-Cter in SUMO2); alternate). Residue Lys182 forms a Glycyl lysine isopeptide (Lys-Gly) (interchain with G-Cter in ubiquitin); alternate linkage. Tudor domains follow at residues 257 to 320 (KLFV…LKKT) and 347 to 403 (LLKS…SMKT). 3 disordered regions span residues 404 to 424 (SSAS…PNMG), 444 to 512 (IQFK…TLSE), and 531 to 570 (SVTS…AFHG). Residues 454 to 467 (PIAPPAPLPIPPLS) are compositionally biased toward pro residues. The segment covering 476-494 (ESQLAQSRKQVAKKSTSFR) has biased composition (polar residues). The segment covering 495–512 (PGSVGSGHSSPTSSTLSE) has biased composition (low complexity). Residues 539–565 (AAPPVPPVPPGPPTPPGPPAPPGPLAP) are compositionally biased toward pro residues. Positions 611–682 (YRGKNPLLVP…EMFCLDPYVL (72 aa)) constitute an MBD domain. Residues 744–817 (VGCDCKDGCR…MCTNRLVQHG (74 aa)) enclose the Pre-SET domain. Residues Cys746, Cys748, Cys752, Cys758, Cys760, Cys798, Cys802, Cys804, and Cys809 each coordinate Zn(2+). Residues 820–1282 (VRLQLFKTQN…AGTELTWDYN (463 aa)) enclose the SET domain. S-adenosyl-L-methionine-binding positions include 830–832 (KGW), Asp868, and Tyr870. Residue Lys884 forms a Glycyl lysine isopeptide (Lys-Gly) (interchain with G-Cter in ubiquitin) linkage. Residues 885-1174 (EGYESDVPTS…KNLSGPTKRQ (290 aa)) form a disordered region. Residues 913–924 (EDPEESNDDSSD) show a composition bias toward acidic residues. Over residues 950-966 (GQKENELSEMTSKDSRP) the composition is skewed to basic and acidic residues. Phosphoserine is present on Ser1042. Over residues 1048-1066 (FKDEGDNKQPKKEDPENRN) the composition is skewed to basic and acidic residues. A Glycyl lysine isopeptide (Lys-Gly) (interchain with G-Cter in SUMO2); alternate cross-link involves residue Lys1049. Lys1049 participates in a covalent cross-link: Glycyl lysine isopeptide (Lys-Gly) (interchain with G-Cter in SUMO1); alternate. Glycyl lysine isopeptide (Lys-Gly) (interchain with G-Cter in SUMO2) cross-links involve residues Lys1055 and Lys1085. Polar residues predominate over residues 1097-1112 (SVLQSQRVVTSTQSNP). Over residues 1116-1131 (LTLSSSTESEGESGTS) the composition is skewed to low complexity. A compositionally biased stretch (polar residues) spans 1137–1156 (GHTSATAVDSDDIQTISSGS). Lys1165 is covalently cross-linked (Glycyl lysine isopeptide (Lys-Gly) (interchain with G-Cter in SUMO2)). N6,N6,N6-trimethyllysine; alternate occurs at positions 1186 and 1194. N6,N6-dimethyllysine; alternate is present on residues Lys1186 and Lys1194. Residues Arg1236 and 1239-1240 (NH) contribute to the S-adenosyl-L-methionine site. Residues Cys1242, Cys1295, Cys1297, and Cys1302 each coordinate Zn(2+). Residues 1291–1307 (KELLCCCGAIECRGRLL) enclose the Post-SET domain.

Belongs to the class V-like SAM-binding methyltransferase superfamily. Histone-lysine methyltransferase family. Suvar3-9 subfamily. As to quaternary structure, part of a complex containing at least CDYL, REST, WIZ, SETDB1, EHMT1 and EHMT2. Forms a complex with ATRX, TRIM28 and ZNF274. Probably part of a corepressor complex containing ZNF304, TRIM28, SETDB1 and DNMT1. Interacts with TRIM28/TIF1B. Interacts with ATF7IP and ATF7IP2; the interaction with ATF7IP is required to stimulate histone methyltransferase activity and facilitate the conversion of dimethylated to trimethylated H3 'Lys-9'. Interacts with MBD1; interaction is abolished when MBD1 is sumoylated. Interacts with CBX1 and CBX5. Interacts with DNMT3A and DNMT3B. Interacts with SUMO2. Interacts with MPHOSPH8. Interacts with ERG. Interacts with HDAC1, HDAC2, SIN3A, SIN3B. Interacts with ATRX. Interacts with RESF1. Interacts with ZNF638. Interacts with TASOR. Interacts with ZNF263; recruited to the SIX3 promoter along with other proteins involved in chromatin modification and transcriptional corepression where it contributes to transcriptional repression. Interacts with PHF13; the interaction probably enhances SETDB1 chromatin-associated levels and activity. Interacts with VRK1. Degraded by the proteasome, shielded by interaction with ATF7IP. Post-translationally, monoubiquitinated at Lys-884 by E2 enzymes UBE2E family. The conjugated-Ub is protected from deubiquitination through the SET domain. Monoubiquitination at Lys-884 is required for catalytic activity and H3K9 methylation and endogenous retrovirus silencing. As to expression, ubiquitously expressed. Strong expression in liver and testis. Expressed in the brain, lungs, kidneys, uterus and seminal vesicles.

It is found in the nucleus. Its subcellular location is the chromosome. The catalysed reaction is N(6),N(6)-dimethyl-L-lysyl(9)-[histone H3] + S-adenosyl-L-methionine = N(6),N(6),N(6)-trimethyl-L-lysyl(9)-[histone H3] + S-adenosyl-L-homocysteine + H(+). Histone methyltransferase that specifically trimethylates 'Lys-9' of histone H3. H3 'Lys-9' trimethylation represents a specific tag for epigenetic transcriptional repression by recruiting HP1 (CBX1, CBX3 and/or CBX5) proteins to methylated histones. Mainly functions in euchromatin regions, thereby playing a central role in the silencing of euchromatic genes. H3 'Lys-9' trimethylation is coordinated with DNA methylation. Probably forms a complex with MBD1 and ATF7IP that represses transcription and couples DNA methylation and histone 'Lys-9' trimethylation. Its activity is dependent on MBD1 and is heritably maintained through DNA replication by being recruited by CAF-1. SETDB1 is targeted to histone H3 by TRIM28/TIF1B, a factor recruited by KRAB zinc-finger proteins. Probably forms a corepressor complex required for activated KRAS-mediated promoter hypermethylation and transcriptional silencing of tumor suppressor genes (TSGs) or other tumor-related genes in colorectal cancer (CRC) cells. Required to maintain a transcriptionally repressive state of genes in undifferentiated embryonic stem cells (ESCs). In ESCs, in collaboration with TRIM28, is also required for H3K9me3 and silencing of endogenous and introduced retroviruses in a DNA-methylation independent-pathway. Associates at promoter regions of tumor suppressor genes (TSGs) leading to their gene silencing. The SETDB1-TRIM28-ZNF274 complex may play a role in recruiting ATRX to the 3'-exons of zinc-finger coding genes with atypical chromatin signatures to establish or maintain/protect H3K9me3 at these transcriptionally active regions. The sequence is that of Histone-lysine N-methyltransferase SETDB1 from Mus musculus (Mouse).